A 186-amino-acid polypeptide reads, in one-letter code: uncharacterized protein (186 aa).

Belongs to the geranylgeranyl reductase family. ChlP subfamily.

This is an uncharacterized protein from Methanosarcina barkeri.